The primary structure comprises 185 residues: Ribosome-recycling factor (185 aa).

This sequence belongs to the RRF family.

Its subcellular location is the cytoplasm. Responsible for the release of ribosomes from messenger RNA at the termination of protein biosynthesis. May increase the efficiency of translation by recycling ribosomes from one round of translation to another. This chain is Ribosome-recycling factor, found in Azoarcus sp. (strain BH72).